Consider the following 489-residue polypeptide: Ribonuclease G (489 aa).

The 90-residue stretch at 39 to 128 folds into the S1 motif domain; it reads GNIYKGRVSR…LTTDITLPSR (90 aa). The Mg(2+) site is built by Asp304 and Asp347.

The protein belongs to the RNase E/G family. RNase G subfamily. In terms of assembly, homodimer, in equilibrium with possible higher multimers. It depends on Mg(2+) as a cofactor.

It localises to the cytoplasm. In terms of biological role, an endonuclease that acts in the processing of the 5'-end of 16S rRNA and 23S rRNA. It prefers 5'-monophosphorylated substrates and cleaves single-stranded sites rich in A and U residues; contributes to tRNA processing and mRNA turnover. The polypeptide is Ribonuclease G (rng) (Escherichia coli O157:H7).